We begin with the raw amino-acid sequence, 177 residues long: Large ribosomal subunit protein uL6 (177 aa).

This sequence belongs to the universal ribosomal protein uL6 family. As to quaternary structure, part of the 50S ribosomal subunit.

This protein binds to the 23S rRNA, and is important in its secondary structure. It is located near the subunit interface in the base of the L7/L12 stalk, and near the tRNA binding site of the peptidyltransferase center. In Halorhodospira halophila (strain DSM 244 / SL1) (Ectothiorhodospira halophila (strain DSM 244 / SL1)), this protein is Large ribosomal subunit protein uL6.